A 332-amino-acid polypeptide reads, in one-letter code: Phospho-N-acetylmuramoyl-pentapeptide-transferase (332 aa).

A run of 8 helical transmembrane segments spans residues 9–29 (IYTI…IIPF), 55–75 (TIGG…AGLI), 79–99 (LWVA…DDFI), 115–135 (MSLQ…ISVM), 155–175 (IPQY…VVVA), 196–216 (IVAA…LAIF), 253–273 (AVAI…IYFA), and 312–332 (VVIV…LGLN).

Belongs to the glycosyltransferase 4 family. MraY subfamily. Mg(2+) serves as cofactor.

The protein localises to the cell membrane. The enzyme catalyses UDP-N-acetyl-alpha-D-muramoyl-L-alanyl-gamma-D-glutamyl-meso-2,6-diaminopimeloyl-D-alanyl-D-alanine + di-trans,octa-cis-undecaprenyl phosphate = di-trans,octa-cis-undecaprenyl diphospho-N-acetyl-alpha-D-muramoyl-L-alanyl-D-glutamyl-meso-2,6-diaminopimeloyl-D-alanyl-D-alanine + UMP. Its pathway is cell wall biogenesis; peptidoglycan biosynthesis. Its function is as follows. Catalyzes the initial step of the lipid cycle reactions in the biosynthesis of the cell wall peptidoglycan: transfers peptidoglycan precursor phospho-MurNAc-pentapeptide from UDP-MurNAc-pentapeptide onto the lipid carrier undecaprenyl phosphate, yielding undecaprenyl-pyrophosphoryl-MurNAc-pentapeptide, known as lipid I. This is Phospho-N-acetylmuramoyl-pentapeptide-transferase from Alkaliphilus oremlandii (strain OhILAs) (Clostridium oremlandii (strain OhILAs)).